The following is a 262-amino-acid chain: CD99 antigen-like protein 2 (262 aa).

A signal peptide spans 1–25 (MVAWRSAFLVCLAFSLATLVQRGSG). Topologically, residues 26-185 (DFDDFNLEDA…PGSGMVAEPG (160 aa)) are extracellular. The disordered stretch occupies residues 38–181 (ETSSVKQPWD…SNDDPGSGMV (144 aa)). Composition is skewed to low complexity over residues 49 to 60 (TTTTTTNRPGTT) and 98 to 119 (VTTT…GNDF). Composition is skewed to basic and acidic residues over residues 125 to 136 (LDDRNDRDDGRR) and 159 to 168 (YKPDKGKGDG). Ser178 carries O-linked (Xyl...) (chondroitin sulfate) serine glycosylation. The chain crosses the membrane as a helical span at residues 186–206 (TIAGVASALAMALIGAVSSYI). At 207-262 (SYQQKKFCFSIQQGLNADYVKGENLEAVVCEEPQVKYSTLHTQSAEPPPPPEPARI) the chain is on the cytoplasmic side.

The protein belongs to the CD99 family. In terms of processing, O-glycosylated. In terms of tissue distribution, detected in cerebrospinal fluid (at protein level). Expressed in many tissues, with low expression in thymus.

It is found in the cell membrane. The protein resides in the cell junction. The protein localises to the secreted. Plays a role in a late step of leukocyte extravasation helping cells to overcome the endothelial basement membrane. Acts at the same site as, but independently of, PECAM1. Homophilic adhesion molecule, but these interactions may not be required for cell aggregation. The protein is CD99 antigen-like protein 2 (CD99L2) of Homo sapiens (Human).